A 341-amino-acid polypeptide reads, in one-letter code: UDP-3-O-acylglucosamine N-acyltransferase (341 aa).

His241 functions as the Proton acceptor in the catalytic mechanism.

It belongs to the transferase hexapeptide repeat family. LpxD subfamily. In terms of assembly, homotrimer.

The enzyme catalyses a UDP-3-O-[(3R)-3-hydroxyacyl]-alpha-D-glucosamine + a (3R)-hydroxyacyl-[ACP] = a UDP-2-N,3-O-bis[(3R)-3-hydroxyacyl]-alpha-D-glucosamine + holo-[ACP] + H(+). The protein operates within bacterial outer membrane biogenesis; LPS lipid A biosynthesis. In terms of biological role, catalyzes the N-acylation of UDP-3-O-acylglucosamine using 3-hydroxyacyl-ACP as the acyl donor. Is involved in the biosynthesis of lipid A, a phosphorylated glycolipid that anchors the lipopolysaccharide to the outer membrane of the cell. The polypeptide is UDP-3-O-acylglucosamine N-acyltransferase (Histophilus somni (strain 129Pt) (Haemophilus somnus)).